A 952-amino-acid chain; its full sequence is RNA polymerase-associated protein RapA (952 aa).

The Helicase ATP-binding domain maps to 164-334; it reads EVGRRYAPRV…FARLRLLDPD (171 aa). ATP is bound at residue 177–184; it reads DEVGLGKT. A DEAH box motif is present at residues 280–283; that stretch reads DEAH. A Helicase C-terminal domain is found at 492–668; the sequence is RVNWLLELLK…GKSDGLESLI (177 aa).

This sequence belongs to the SNF2/RAD54 helicase family. RapA subfamily. As to quaternary structure, interacts with the RNAP. Has a higher affinity for the core RNAP than for the holoenzyme. Its ATPase activity is stimulated by binding to RNAP.

In terms of biological role, transcription regulator that activates transcription by stimulating RNA polymerase (RNAP) recycling in case of stress conditions such as supercoiled DNA or high salt concentrations. Probably acts by releasing the RNAP, when it is trapped or immobilized on tightly supercoiled DNA. Does not activate transcription on linear DNA. Probably not involved in DNA repair. The protein is RNA polymerase-associated protein RapA of Aliivibrio fischeri (strain ATCC 700601 / ES114) (Vibrio fischeri).